A 294-amino-acid polypeptide reads, in one-letter code: 4-hydroxy-tetrahydrodipicolinate synthase (294 aa).

Thr-44 provides a ligand contact to pyruvate. Tyr-132 functions as the Proton donor/acceptor in the catalytic mechanism. Catalysis depends on Lys-161, which acts as the Schiff-base intermediate with substrate. Residue Ile-206 coordinates pyruvate.

Belongs to the DapA family. As to quaternary structure, homotetramer; dimer of dimers.

It localises to the cytoplasm. It carries out the reaction L-aspartate 4-semialdehyde + pyruvate = (2S,4S)-4-hydroxy-2,3,4,5-tetrahydrodipicolinate + H2O + H(+). It participates in amino-acid biosynthesis; L-lysine biosynthesis via DAP pathway; (S)-tetrahydrodipicolinate from L-aspartate: step 3/4. Is not inhibited by (S)-lysine, in contrast to E.coli DapA. Functionally, catalyzes the condensation of (S)-aspartate-beta-semialdehyde [(S)-ASA] and pyruvate to 4-hydroxy-tetrahydrodipicolinate (HTPA). This chain is 4-hydroxy-tetrahydrodipicolinate synthase, found in Thermotoga maritima (strain ATCC 43589 / DSM 3109 / JCM 10099 / NBRC 100826 / MSB8).